A 285-amino-acid chain; its full sequence is Diphthine methyl ester synthase (285 aa).

S-adenosyl-L-methionine is bound by residues L9, D84, G87, 112-113 (SI), and L163. A Phosphoserine modification is found at S171. Residues V225 and H250 each contribute to the S-adenosyl-L-methionine site.

Belongs to the diphthine synthase family.

It catalyses the reaction 2-[(3S)-amino-3-carboxypropyl]-L-histidyl-[translation elongation factor 2] + 4 S-adenosyl-L-methionine = diphthine methyl ester-[translation elongation factor 2] + 4 S-adenosyl-L-homocysteine + 3 H(+). It functions in the pathway protein modification; peptidyl-diphthamide biosynthesis. Its function is as follows. S-adenosyl-L-methionine-dependent methyltransferase that catalyzes four methylations of the modified target histidine residue in translation elongation factor 2 (EF-2), to form an intermediate called diphthine methyl ester. The four successive methylation reactions represent the second step of diphthamide biosynthesis. This is Diphthine methyl ester synthase (DPH5) from Bos taurus (Bovine).